A 365-amino-acid chain; its full sequence is Protein RecA (365 aa).

Gly-76–Thr-83 is an ATP binding site. Residues Asp-346–Ala-365 form a disordered region. Acidic residues predominate over residues Asp-353–Ala-365.

The protein belongs to the RecA family.

It is found in the cytoplasm. Functionally, can catalyze the hydrolysis of ATP in the presence of single-stranded DNA, the ATP-dependent uptake of single-stranded DNA by duplex DNA, and the ATP-dependent hybridization of homologous single-stranded DNAs. It interacts with LexA causing its activation and leading to its autocatalytic cleavage. This Parvibaculum lavamentivorans (strain DS-1 / DSM 13023 / NCIMB 13966) protein is Protein RecA.